Here is a 325-residue protein sequence, read N- to C-terminus: NADH-quinone oxidoreductase subunit H (325 aa).

A run of 8 helical transmembrane segments spans residues 11–31 (ILLTILKAVVILLVVVTCGAF), 81–101 (VIFTLAPMIAFTSLLLAFAIV), 114–134 (IGILFFLMMAGLAVYAVLFAG), 154–174 (LSYEVFLGLSLMGVVAQAGSF), 186–206 (VWNVIPQFFGFITFAIAGVAV), 237–257 (FFVGEYIGIVTISALMVTLFF), 265–285 (LPPFIWFALKTAFFMMMFILI), and 304–324 (ICLPLTLINLLVTAAVILWQA).

The protein belongs to the complex I subunit 1 family. In terms of assembly, NDH-1 is composed of 13 different subunits. Subunits NuoA, H, J, K, L, M, N constitute the membrane sector of the complex.

The protein localises to the cell inner membrane. The catalysed reaction is a quinone + NADH + 5 H(+)(in) = a quinol + NAD(+) + 4 H(+)(out). Functionally, NDH-1 shuttles electrons from NADH, via FMN and iron-sulfur (Fe-S) centers, to quinones in the respiratory chain. The immediate electron acceptor for the enzyme in this species is believed to be ubiquinone. Couples the redox reaction to proton translocation (for every two electrons transferred, four hydrogen ions are translocated across the cytoplasmic membrane), and thus conserves the redox energy in a proton gradient. This subunit may bind ubiquinone. This chain is NADH-quinone oxidoreductase subunit H, found in Escherichia fergusonii (strain ATCC 35469 / DSM 13698 / CCUG 18766 / IAM 14443 / JCM 21226 / LMG 7866 / NBRC 102419 / NCTC 12128 / CDC 0568-73).